The sequence spans 545 residues: MVEKDIYMCAEIIIRPQAYNLRLLQKENLKKMSVCSSTPVPILSFTERAKSLTEIQQAHAFMLKTGLFHDTFSASKLVAFAATNPEPKTVSYAHSILNRIGSPNGFTHNSVIRAYANSSTPEVALTVFREMLLGPVFPDKYSFTFVLKACAAFCGFEEGRQIHGLFIKSGLVTDVFVENTLVNVYGRSGYFEIARKVLDRMPVRDAVSWNSLLSAYLEKGLVDEARALFDEMEERNVESWNFMISGYAAAGLVKEAKEVFDSMPVRDVVSWNAMVTAYAHVGCYNEVLEVFNKMLDDSTEKPDGFTLVSVLSACASLGSLSQGEWVHVYIDKHGIEIEGFLATALVDMYSKCGKIDKALEVFRATSKRDVSTWNSIISDLSVHGLGKDALEIFSEMVYEGFKPNGITFIGVLSACNHVGMLDQARKLFEMMSSVYRVEPTIEHYGCMVDLLGRMGKIEEAEELVNEIPADEASILLESLLGACKRFGQLEQAERIANRLLELNLRDSSGYAQMSNLYASDGRWEKVIDGRRNMRAERVNRSLDVA.

PPR repeat units lie at residues 104–138, 139–173, 174–204, 205–239, 240–266, 267–301, 303–337, 338–368, 369–403, 404–434, and 440–474; these read NGFTHNSVIRAYANSSTPEVALTVFREMLLGPVFP, DKYSFTFVLKACAAFCGFEEGRQIHGLFIKSGLVT, DVFVENTLVNVYGRSGYFEIARKVLDRMPVR, DAVSWNSLLSAYLEKGLVDEARALFDEMEERNVES, WNFMISGYAAAGLVKEAKEVFDSMPVR, DVVSWNAMVTAYAHVGCYNEVLEVFNKMLDDSTEK, DGFTLVSVLSACASLGSLSQGEWVHVYIDKHGIEI, EGFLATALVDMYSKCGKIDKALEVFRATSKR, DVSTWNSIISDLSVHGLGKDALEIFSEMVYEGFKP, NGITFIGVLSACNHVGMLDQARKLFEMMSSV, and TIEHYGCMVDLLGRMGKIEEAEELVNEIPADEASI. The segment at 475-545 is type E motif; sequence LLESLLGACK…ERVNRSLDVA (71 aa).

This sequence belongs to the PPR family. PCMP-E subfamily.

This Arabidopsis thaliana (Mouse-ear cress) protein is Pentatricopeptide repeat-containing protein At4g18840 (PCMP-E101).